The primary structure comprises 444 residues: Lycopaoctaene synthase (444 aa).

The NADP(+) site is built by arginine 48 and arginine 73. 3 residues coordinate Mg(2+): aspartate 76, glutamate 79, and aspartate 80. Residues arginine 215, lysine 315, and arginine 317 each coordinate NADP(+). A run of 2 helical transmembrane segments spans residues threonine 391–tyrosine 411 and glycine 415–phenylalanine 435.

It belongs to the phytoene/squalene synthase family. It depends on Mg(2+) as a cofactor.

It is found in the membrane. It carries out the reaction 2 (2E,6E)-farnesyl diphosphate + NADH + H(+) = squalene + 2 diphosphate + NAD(+). The catalysed reaction is 2 (2E,6E)-farnesyl diphosphate + NADPH + H(+) = squalene + 2 diphosphate + NADP(+). It catalyses the reaction 2 (2E,6E,10E)-geranylgeranyl diphosphate + NADPH + H(+) = all-trans-lycopaoctaene + 2 diphosphate + NADP(+). Converts the C20 geranylgeranyl diphosphate (GGPP) to the C40 lycopaoctaene, the first committed intermediate in the production of lycopadiene. Converts farnesyl diphosphate (FPP) into squalene, a precursor for sterol biosynthesis in eukaryotes. Converts with low efficiency the C20 phytyl diphosphate (PPP) to the C40 lycopadiene in vitro. This reaction may not have biological significance in vivo. The chain is Lycopaoctaene synthase from Botryococcus braunii (Green alga).